Consider the following 135-residue polypeptide: UPF0201 protein TON_1346 (135 aa).

Belongs to the UPF0201 family.

This is UPF0201 protein TON_1346 from Thermococcus onnurineus (strain NA1).